A 52-amino-acid chain; its full sequence is Small ribosomal subunit protein uS14 (52 aa).

Cys17, Cys20, Cys35, and Cys38 together coordinate Zn(2+).

This sequence belongs to the universal ribosomal protein uS14 family. Zinc-binding uS14 subfamily. In terms of assembly, part of the 30S ribosomal subunit. The cofactor is Zn(2+).

Its function is as follows. Binds 16S rRNA, required for the assembly of 30S particles. The sequence is that of Small ribosomal subunit protein uS14 from Halobacterium salinarum (strain ATCC 700922 / JCM 11081 / NRC-1) (Halobacterium halobium).